A 104-amino-acid polypeptide reads, in one-letter code: MGHAMTAQHQSDTLLHRLNTLPPKRYGVFLLNDDYTTMEFVVEILTEIFMLGQEQAVAVMLSVHHEGKGLCGTYTRDIAQTKQQQVMQRAKAEGHPLQCIVEEI.

It belongs to the ClpS family. Binds to the N-terminal domain of the chaperone ClpA.

Involved in the modulation of the specificity of the ClpAP-mediated ATP-dependent protein degradation. The chain is ATP-dependent Clp protease adapter protein ClpS from Neisseria gonorrhoeae (strain ATCC 700825 / FA 1090).